The primary structure comprises 976 residues: Vacuolar membrane protease (976 aa).

At 1–15 the chain is on the cytoplasmic side; it reads MKLKSVFRSVLKYRK. Residues 16 to 36 traverse the membrane as a helical segment; sequence TNLSLLLLITYSIITLLYIFD. The Vacuolar portion of the chain corresponds to 37-359; the sequence is HERYKLNLPK…KFFVISAKTL (323 aa). N96 and N121 each carry an N-linked (GlcNAc...) asparagine glycan. H156 and D168 together coordinate Zn(2+). The N-linked (GlcNAc...) asparagine glycan is linked to N189. E200 functions as the Proton acceptor in the catalytic mechanism. E201 serves as a coordination point for Zn(2+). N-linked (GlcNAc...) asparagine glycans are attached at residues N212 and N217. The Zn(2+) site is built by E226 and H300. A helical membrane pass occupies residues 360 to 380; it reads FYWNCIFLLVSPVVAIGLYLI. The Cytoplasmic portion of the chain corresponds to 381–392; it reads SRDRMTWKSHSW. Residues 393 to 412 form a helical membrane-spanning segment; that stretch reads LSWTRFPLSLAAGIIVQKLF. Residues 413 to 428 are Vacuolar-facing; that stretch reads SNDIIRSNPLTFSRNY. A helical transmembrane segment spans residues 429–449; that stretch reads FWPISAFFTQVIFTSYVLINC. The Cytoplasmic segment spans residues 450–461; that stretch reads SNFFFPCADMKS. A helical membrane pass occupies residues 462–482; the sequence is LSIIELFIILWTILLFTSKLL. At 483–496 the chain is on the vacuolar side; that stretch reads YSSDYRYTGLYPLS. Residues 497 to 517 traverse the membrane as a helical segment; it reads IFFLLSTIAAILRLLALALGM. At 518–627 the chain is on the cytoplasmic side; sequence RTRKRLGREC…NSLKLEYTDY (110 aa). The tract at residues 528–610 is disordered; it reads RDHHSNYSSH…PLLKGSNSME (83 aa). Positions 549 to 558 are enriched in polar residues; the sequence is NLEQPQDQFT. A compositionally biased stretch (low complexity) spans 559–570; it reads SSQDDQASIQDD. Residues 582-601 show a composition bias toward basic and acidic residues; that stretch reads NVDEDHGMDSSSQQHDERVP. The chain crosses the membrane as a helical span at residues 628–648; that stretch reads AWIIQFLLIVPIPSFILFNSV. At 649–668 the chain is on the vacuolar side; that stretch reads DVIMDALNHTVQEGSKATFD. N656 is a glycosylation site (N-linked (GlcNAc...) asparagine). The chain crosses the membrane as a helical span at residues 669 to 689; the sequence is VLRFGMVGSILMALPILPFFY. Topologically, residues 690–692 are cytoplasmic; that stretch reads KVN. Residues 693-713 form a helical membrane-spanning segment; sequence YITISLTALLFLISASKTLLV. At 714–976 the chain is on the vacuolar side; it reads HPFTNSNPLK…LVIVKDAIIL (263 aa). N768, N796, N811, N866, and N937 each carry an N-linked (GlcNAc...) asparagine glycan.

The protein belongs to the peptidase M28 family. The cofactor is Zn(2+).

The protein resides in the vacuole membrane. Functionally, may be involved in vacuolar sorting and osmoregulation. This chain is Vacuolar membrane protease, found in Saccharomyces cerevisiae (strain RM11-1a) (Baker's yeast).